The primary structure comprises 327 residues: DNA repair and recombination protein RadA (327 aa).

113 to 120 is a binding site for ATP; it reads GEFGSGKS.

It belongs to the eukaryotic RecA-like protein family.

Functionally, involved in DNA repair and in homologous recombination. Binds and assemble on single-stranded DNA to form a nucleoprotein filament. Hydrolyzes ATP in a ssDNA-dependent manner and promotes DNA strand exchange between homologous DNA molecules. In Ignicoccus hospitalis (strain KIN4/I / DSM 18386 / JCM 14125), this protein is DNA repair and recombination protein RadA.